Consider the following 514-residue polypeptide: Sugar transport protein 11 (514 aa).

Residues 1–19 (MAGGAFIDESGHGGDYEGR) lie on the Cytoplasmic side of the membrane. The helical transmembrane segment at 20–40 (VTAFVMITCIVAAMGGLLFGY) threads the bilayer. Residues 41–82 (DIGISGGVISMEDFLTKFFPDVLRQMQNKRGRETEYCKYDNE) are Extracellular-facing. Residues 83-103 (LLTLFTSSLYLAALFASFLAS) form a helical membrane-spanning segment. Topologically, residues 104–112 (TITRLFGRK) are cytoplasmic. The helical transmembrane segment at 113–133 (VSMVIGSLAFLSGALLNGLAI) threads the bilayer. Topologically, residues 134 to 137 (NLEM) are extracellular. The chain crosses the membrane as a helical span at residues 138–158 (LIIGRLFLGVGVGFANQSVPL). Residues 159 to 169 (YLSEMAPAKIR) lie on the Cytoplasmic side of the membrane. Residues 170–190 (GALNIGFQLAITIGILAANIV) form a helical membrane-spanning segment. Residues 191–204 (NYVTPKLQNGIGWR) lie on the Extracellular side of the membrane. The helical transmembrane segment at 205 to 225 (LSLGLAGVPAVMMLVGCFFLP) threads the bilayer. Residues 226–290 (DTPNSILERG…RYRPQLTFCT (65 aa)) are Cytoplasmic-facing. The chain crosses the membrane as a helical span at residues 291–311 (FIPFFQQLTGINVIMFYAPVL). Topologically, residues 312 to 320 (FKTIGFGND) are extracellular. Residues 321–341 (ASLISAVITGLVNVLSTIVSI) traverse the membrane as a helical segment. At 342–350 (YSVDKFGRR) the chain is on the cytoplasmic side. A helical membrane pass occupies residues 351–371 (ALFLQGGFQMIVTQIAVGSMI). The Extracellular portion of the chain corresponds to 372-389 (GWKFGFNGEGNLSGVDAD). Residues 390–410 (IILALICLYVAGFAWSWGPLG) form a helical membrane-spanning segment. At 411-428 (WLVPSEICPLEIRSAGQS) the chain is on the cytoplasmic side. Residues 429–449 (LNVSVNMFFTFFIGQFFLTML) traverse the membrane as a helical segment. Residues 450 to 453 (CHMK) lie on the Extracellular side of the membrane. The chain crosses the membrane as a helical span at residues 454-474 (FGLFYFFAGMVLIMTIFIYFL). Residues 475–514 (LPETKGVPIEEMGKVWKEHRYWGKYSNNDDGDDVDDDAYF) are Cytoplasmic-facing.

Belongs to the major facilitator superfamily. Sugar transporter (TC 2.A.1.1) family. In terms of tissue distribution, specifically expressed in germinating pollen and pollen tube (at protein level).

It localises to the cell membrane. With respect to regulation, inhibited by uncouplers such as 2,4-dinitrophenol and carbonyl cyanide-m-chlorophenyl-hydrazone. Functionally, mediates an active uptake of hexoses, probably by sugar/hydrogen symport. Can transport glucose, galactose, mannose, xylose and 3-O-methylglucose, but not fructose and ribose. The chain is Sugar transport protein 11 (STP11) from Arabidopsis thaliana (Mouse-ear cress).